A 107-amino-acid polypeptide reads, in one-letter code: MDLNNRLTEDEALEQAYDIFLELAADNLDPADILLFNLQFEERGGAELFDPAEDWAEHVDFDLNPDFFAEVVIGLAEQEGEEITDIFARVLICREKDHKLCHILWKE.

The protein belongs to the putative dsDNA mimic protein family.

May act as a double-stranded DNA (dsDNA) mimic. Probably regulates the activity of a dsDNA-binding protein. The chain is Putative double-stranded DNA mimic protein ECA2319 from Pectobacterium atrosepticum (strain SCRI 1043 / ATCC BAA-672) (Erwinia carotovora subsp. atroseptica).